A 286-amino-acid chain; its full sequence is Protein NipSnap homolog 2 (286 aa).

The transit peptide at 1-40 (MATRVLHSSCSGLYRAAGPARGKGHATAVIRSLSASHNRP) directs the protein to the mitochondrion.

This sequence belongs to the NipSnap family.

It localises to the mitochondrion matrix. Protein involved in mitophagy. Accumulates on the mitochondria surface in response to mitochondrial depolarization and acts as a 'eat me' signal by recruiting proteins involved in selective autophagy. The chain is Protein NipSnap homolog 2 (nipsnap2) from Danio rerio (Zebrafish).